Here is a 215-residue protein sequence, read N- to C-terminus: Pyridoxine/pyridoxamine 5'-phosphate oxidase (215 aa).

Substrate is bound by residues 9–12 and K69; that span reads RRDY. Residues 64–69, 79–80, K86, and Q108 each bind FMN; these read RILLLK and FT. Substrate-binding residues include Y126, R130, and S134. Residues 143–144 and W188 each bind FMN; that span reads QS. 194–196 lines the substrate pocket; the sequence is RLH. An FMN-binding site is contributed by R198.

This sequence belongs to the pyridoxamine 5'-phosphate oxidase family. As to quaternary structure, homodimer. Requires FMN as cofactor.

The catalysed reaction is pyridoxamine 5'-phosphate + O2 + H2O = pyridoxal 5'-phosphate + H2O2 + NH4(+). The enzyme catalyses pyridoxine 5'-phosphate + O2 = pyridoxal 5'-phosphate + H2O2. It functions in the pathway cofactor metabolism; pyridoxal 5'-phosphate salvage; pyridoxal 5'-phosphate from pyridoxamine 5'-phosphate: step 1/1. The protein operates within cofactor metabolism; pyridoxal 5'-phosphate salvage; pyridoxal 5'-phosphate from pyridoxine 5'-phosphate: step 1/1. In terms of biological role, catalyzes the oxidation of either pyridoxine 5'-phosphate (PNP) or pyridoxamine 5'-phosphate (PMP) into pyridoxal 5'-phosphate (PLP). The protein is Pyridoxine/pyridoxamine 5'-phosphate oxidase of Pseudomonas fluorescens (strain Pf0-1).